The following is a 389-amino-acid chain: Glycerol-3-phosphate dehydrogenase [NAD(+)] 2 (389 aa).

NAD(+)-binding positions include Gly-40–Gly-45, Phe-128, Lys-151, and Ala-184. Residue Lys-151 participates in substrate binding. Lys-244 acts as the Proton acceptor in catalysis. Residues Arg-309 and Gln-338 each coordinate NAD(+). Arg-309–Asn-310 is a binding site for substrate.

The protein belongs to the NAD-dependent glycerol-3-phosphate dehydrogenase family.

The protein localises to the cytoplasm. It catalyses the reaction sn-glycerol 3-phosphate + NAD(+) = dihydroxyacetone phosphate + NADH + H(+). The polypeptide is Glycerol-3-phosphate dehydrogenase [NAD(+)] 2 (GPD2) (Zygosaccharomyces rouxii).